We begin with the raw amino-acid sequence, 442 residues long: Putative mannan endo-1,6-alpha-mannosidase C970.02 (442 aa).

Residues 1–19 form the signal peptide; that stretch reads MSLTIFISLATILFSFAEA. N-linked (GlcNAc...) asparagine glycans are attached at residues asparagine 25, asparagine 82, asparagine 107, asparagine 131, asparagine 201, asparagine 236, asparagine 261, asparagine 264, asparagine 277, and asparagine 361.

The protein belongs to the glycosyl hydrolase 76 family.

The catalysed reaction is Random hydrolysis of (1-&gt;6)-alpha-D-mannosidic linkages in unbranched (1-&gt;6)-mannans.. In Schizosaccharomyces pombe (strain 972 / ATCC 24843) (Fission yeast), this protein is Putative mannan endo-1,6-alpha-mannosidase C970.02.